The sequence spans 395 residues: MEHVDSDFAPIRRSKKVVDSDKIVKAISDDLEQKNFTVLRKLNLVPIKKSVSSPKVCKPSPVKERVDHVFYQKFKSMALQELGTNYLSISYVPSLSKFLSKNLRSMKNCIVFFDKVEHIHQYAGIDRAVSETLSLVDINVVIIEMNDYLMKEGIQSSKSKECIESMGQASYSGQLDFEASEKPSNHTSDLMMMVMRKINNDESIDHIVYFKFEQLDKLSTSTIIEPSKLTEFINVLSVLEKSNNIAFKVLIYSNNVSISSLLSTSLKKKLNTKYTVFEMPILTCAQEQEYLKKMIKFTFDSGSKLLQSYNSLVTCQLNNKESNLAIFFEFLKVFPHPFTYLFNAYTEIIVQSRTFDELLDKIRNRLTIKNYPHSAYNFKKNQRLPLKLTRKVHDR.

In terms of assembly, interacts with RIF1 and RAP1 C-terminus.

The protein resides in the nucleus. It is found in the chromosome. The protein localises to the telomere. Involved in transcriptional silencing and telomere length regulation. Its role in telomere length regulation results from either a block in elongation or promoting degradation of the telomere ends. Loss of RIF1 function results in derepression of an HMR silencer, whose ARS consensus element has been deleted, and in the elongation of telomeres. RAP1 may target the binding of RIF1 to silencers and telomeres. In Saccharomyces cerevisiae (strain ATCC 204508 / S288c) (Baker's yeast), this protein is Protein RIF2 (RIF2).